A 501-amino-acid chain; its full sequence is Glucans biosynthesis protein G (501 aa).

A signal peptide spans 1–24 (MNRRQVLAALAAIPLLPEAFPANA).

It belongs to the OpgD/OpgG family.

It is found in the periplasm. It functions in the pathway glycan metabolism; osmoregulated periplasmic glucan (OPG) biosynthesis. In terms of biological role, involved in the biosynthesis of osmoregulated periplasmic glucans (OPGs). The polypeptide is Glucans biosynthesis protein G (Rhodopseudomonas palustris (strain BisA53)).